The chain runs to 509 residues: Transcription factor SOX-9 (509 aa).

Disordered regions lie at residues methionine 1 to aspartate 67 and arginine 160 to valine 273. Residues serine 30 to serine 41 show a composition bias toward low complexity. The span at aspartate 42–threonine 52 shows a compositional bias: polar residues. Basic and acidic residues-rich tracts occupy residues glycine 56–aspartate 67 and arginine 160–tyrosine 174. Residues glutamate 63–proline 103 are dimerization (DIM). The segment at glutamate 63–proline 103 is PQA. Serine 64 carries the phosphoserine modification. Residues valine 105–lysine 173 constitute a DNA-binding region (HMG box). Phosphoserine is present on serine 211. The segment at proline 224 to proline 307 is transactivation domain (TAM). Short sequence motifs (9aaTAD) lie at residues isoleucine 275 to serine 284 and aspartate 290 to leucine 298. Positions serine 330–proline 415 are disordered. Positions alanine 341–glutamine 376 are enriched in pro residues. Positions histidine 380–proline 415 are enriched in polar residues. The interval arginine 394–proline 509 is transactivation domain (TAC). Residue lysine 398 forms a Glycyl lysine isopeptide (Lys-Gly) (interchain with G-Cter in ubiquitin) linkage. The 9aaTAD 3 signature appears at threonine 460 to tyrosine 468. The interval proline 479–proline 509 is disordered. A compositionally biased stretch (polar residues) spans glycine 485–proline 509.

In terms of assembly, homodimer; homodimerization is required for activity. Interacts (via C-terminus) with ZNF219; forming a complex that binds to the COL2A1 promoter and activates COL2A1 expression. Interacts with DDRGK1. Interacts with EP300/p300. Interacts with beta-catenin (CTNNB1); inhibiting CTNNB1 activity by competing with the binding sites of TCF/LEF within CTNNB1. In terms of processing, acetylated; acetylation impairs nuclear localization and ability to transactivate expression of target genes. Deacetylated by SIRT1. Phosphorylation at Ser-64 and Ser-211 by PKA increases transcriptional activity and may help delay chondrocyte maturation downstream of PTHLH/PTHrP signaling. Phosphorylation at either Ser-64 or Ser-211 is required for sumoylation, but phosphorylation is not dependent on sumoylation. Phosphorylated on tyrosine residues; tyrosine dephosphorylation by PTPN11/SHP2 blocks SOX9 phosphorylation by PKA and subsequent SUMOylation. Post-translationally, ubiquitinated; ubiquitination leads to proteasomal degradation and is negatively regulated by DDRGK1. In terms of processing, sumoylated; phosphorylation at either Ser-64 or Ser-211 is required for sumoylation. Sumoylation is induced by BMP signaling pathway.

The protein resides in the nucleus. Transcription factor that plays a key role in chondrocytes differentiation and skeletal development. Specifically binds the 5'-ACAAAG-3' DNA motif present in enhancers and super-enhancers and promotes expression of genes important for chondrogenesis, including cartilage matrix protein-coding genes COL2A1, COL4A2, COL9A1, COL11A2 and ACAN, SOX5 and SOX6. Also binds to some promoter regions. Plays a central role in successive steps of chondrocyte differentiation. Absolutely required for precartilaginous condensation, the first step in chondrogenesis during which skeletal progenitors differentiate into prechondrocytes. Together with SOX5 and SOX6, required for overt chondrogenesis when condensed prechondrocytes differentiate into early stage chondrocytes, the second step in chondrogenesis. Later, required to direct hypertrophic maturation and block osteoblast differentiation of growth plate chondrocytes: maintains chondrocyte columnar proliferation, delays prehypertrophy and then prevents osteoblastic differentiation of chondrocytes by lowering beta-catenin (CTNNB1) signaling and RUNX2 expression. Also required for chondrocyte hypertrophy, both indirectly, by keeping the lineage fate of chondrocytes, and directly, by remaining present in upper hypertrophic cells and transactivating COL10A1 along with MEF2C. Low lipid levels are the main nutritional determinant for chondrogenic commitment of skeletal progenitor cells: when lipids levels are low, FOXO (FOXO1 and FOXO3) transcription factors promote expression of SOX9, which induces chondrogenic commitment and suppresses fatty acid oxidation. Mechanistically, helps, but is not required, to remove epigenetic signatures of transcriptional repression and deposit active promoter and enhancer marks at chondrocyte-specific genes. Acts in cooperation with the Hedgehog pathway-dependent GLI (GLI1 and GLI3) transcription factors. In addition to cartilage development, also acts as a regulator of proliferation and differentiation in epithelial stem/progenitor cells: involved in the lung epithelium during branching morphogenesis, by balancing proliferation and differentiation and regulating the extracellular matrix. Controls epithelial branching during kidney development. This Homo sapiens (Human) protein is Transcription factor SOX-9.